We begin with the raw amino-acid sequence, 740 residues long: Pheromone-regulated membrane protein 10 (740 aa).

Disordered regions lie at residues 1–48 (MGKN…RSGL), 65–97 (FADE…KEEC), and 241–269 (NQPG…PTGE). A compositionally biased stretch (basic and acidic residues) spans 7-18 (QAAEGEEARRGS). Residues 19-33 (ESSGSSAEPSGAVAE) show a composition bias toward low complexity. Over residues 67–76 (DEDEVVEQDE) the composition is skewed to acidic residues. Residues 256-267 (SAQTLSSETLPT) show a composition bias toward polar residues. 10 consecutive transmembrane segments (helical) span residues 422-442 (AWMC…FAFG), 445-465 (WINL…QFIV), 475-495 (VFEI…GSIP), 499-519 (ICFG…YIIL), 541-561 (IIYS…FGWI), 574-594 (ELSP…LSLI), 599-619 (WSQI…TYWS), 622-642 (HFTA…GIMG), 651-671 (GLAM…GIAS), and 707-727 (ITMI…TLVV).

This sequence belongs to the ThrE exporter (TC 2.A.79) family.

It localises to the membrane. This Eremothecium gossypii (strain ATCC 10895 / CBS 109.51 / FGSC 9923 / NRRL Y-1056) (Yeast) protein is Pheromone-regulated membrane protein 10.